We begin with the raw amino-acid sequence, 275 residues long: Ribosomal RNA small subunit methyltransferase A (275 aa).

S-adenosyl-L-methionine contacts are provided by Asn-21, Leu-23, Gly-48, Glu-69, Asp-94, and Asn-115.

This sequence belongs to the class I-like SAM-binding methyltransferase superfamily. rRNA adenine N(6)-methyltransferase family. RsmA subfamily.

The protein localises to the cytoplasm. It carries out the reaction adenosine(1518)/adenosine(1519) in 16S rRNA + 4 S-adenosyl-L-methionine = N(6)-dimethyladenosine(1518)/N(6)-dimethyladenosine(1519) in 16S rRNA + 4 S-adenosyl-L-homocysteine + 4 H(+). In terms of biological role, specifically dimethylates two adjacent adenosines (A1518 and A1519) in the loop of a conserved hairpin near the 3'-end of 16S rRNA in the 30S particle. May play a critical role in biogenesis of 30S subunits. The sequence is that of Ribosomal RNA small subunit methyltransferase A from Clostridium botulinum (strain ATCC 19397 / Type A).